A 226-amino-acid polypeptide reads, in one-letter code: Ribonuclease 3 (226 aa).

Residues 5 to 127 (LERLQRALGY…IIGAIYLDAG (123 aa)) enclose the RNase III domain. E40 lines the Mg(2+) pocket. Residue D44 is part of the active site. Residues D113 and E116 each coordinate Mg(2+). E116 is a catalytic residue. The region spanning 154–224 (DSKTRLQEYL…AKQALLALGV (71 aa)) is the DRBM domain.

The protein belongs to the ribonuclease III family. In terms of assembly, homodimer. Mg(2+) serves as cofactor.

It is found in the cytoplasm. It carries out the reaction Endonucleolytic cleavage to 5'-phosphomonoester.. Digests double-stranded RNA. Involved in the processing of primary rRNA transcript to yield the immediate precursors to the large and small rRNAs (23S and 16S). Processes some mRNAs, and tRNAs when they are encoded in the rRNA operon. Processes pre-crRNA and tracrRNA of type II CRISPR loci if present in the organism. This is Ribonuclease 3 from Hahella chejuensis (strain KCTC 2396).